The sequence spans 291 residues: D-alanine--D-alanine ligase (291 aa).

The 193-residue stretch at 99 to 291 folds into the ATP-grasp domain; it reads KRIVKSLGIN…FKKLISIIIT (193 aa). Position 125-179 (125-179) interacts with ATP; sequence EWNKFPAVVKPVREGSSVGLKIVESLEELKEYALDLLKKTERVMVEEFVEGRDMT. 3 residues coordinate Mg(2+): aspartate 245, glutamate 258, and asparagine 260.

This sequence belongs to the D-alanine--D-alanine ligase family. Mg(2+) serves as cofactor. The cofactor is Mn(2+).

The protein resides in the cytoplasm. The enzyme catalyses 2 D-alanine + ATP = D-alanyl-D-alanine + ADP + phosphate + H(+). It functions in the pathway cell wall biogenesis; peptidoglycan biosynthesis. Cell wall formation. The chain is D-alanine--D-alanine ligase from Aquifex aeolicus (strain VF5).